The primary structure comprises 229 residues: Potassium/proton antiporter CemA (229 aa).

2 helical membrane-spanning segments follow: residues 7-27 and 107-127; these read FTPL…SFSV and ILHF…SILG.

This sequence belongs to the CemA family.

The protein resides in the plastid. It localises to the chloroplast inner membrane. It catalyses the reaction K(+)(in) + H(+)(out) = K(+)(out) + H(+)(in). In terms of biological role, contributes to K(+)/H(+) antiport activity by supporting proton efflux to control proton extrusion and homeostasis in chloroplasts in a light-dependent manner to modulate photosynthesis. Prevents excessive induction of non-photochemical quenching (NPQ) under continuous-light conditions. Indirectly promotes efficient inorganic carbon uptake into chloroplasts. This is Potassium/proton antiporter CemA from Solanum tuberosum (Potato).